We begin with the raw amino-acid sequence, 303 residues long: NmrA-like family domain-containing oxidoreductase FVEG_08287 (303 aa).

NADP(+) is bound by residues leucine 8–leucine 13, leucine 8–glycine 14, leucine 36–serine 39, arginine 37, glutamine 56–glycine 57, isoleucine 77–arginine 79, and phenylalanine 159–phenylalanine 162.

It belongs to the NmrA-type oxidoreductase family.

Its function is as follows. NmrA-like family domain-containing oxidoreductase; part of the Fusarium detoxification of benzoxazolinone cluster 1 (FDB1) involved in the degradation of benzoxazolinones produced by the host plant. Maize, wheat, and rye produce the 2 benzoxazinone phytoanticipins 2,4-dihy-droxy-7-methoxy-1,4-benzoxazin-3-one (DIMBOA) and 2,4-dihydroxy-1,4-benzoxazin-3-one (DIBOA) that, due to their inherent instability once released, spontaneously degrade to the more stable corresponding benzoxazolinones, 6-methoxy-2-benzoxazolinone (MBOA) and 2-benzoxazolinone (BOA), respectively. The first step in the detoxification of benzoxazolinones involves the hydrolysis of the cyclic ester bond of benzoxazolinones by the FDB1 cluster gamma-lactamase MBL1 to aminophenols. MBL1 is able to convert BOA into 2-aminophenol (2-AP), as well as MBOA into 5-methoxy-2-aminophenol (2-AMP). The FDB2 cluster N-malonyltransferase FDB2/NAT1 then metabolizes aminophenols via N-malonylation to non-toxic malonamic acids. FDB2/NAT1 converts 2-AP into N-(2-hydroxyphenyl) malonamic acid (HPMA) and 2-AMP into N-(2-hydroxy-4-methoxyphenyl) malonamic acid (HMPMA). The duplicated dienlactone hydrolases DLH1 and DLH2 may provide redundant function for hydrolyzing the lactone moiety in the BOA molecule. The roles of the amidases an other enzymes encoded by the 2 FDB clusters have not been identified so far. This chain is NmrA-like family domain-containing oxidoreductase FVEG_08287, found in Gibberella moniliformis (strain M3125 / FGSC 7600) (Maize ear and stalk rot fungus).